A 354-amino-acid polypeptide reads, in one-letter code: Uroporphyrinogen decarboxylase (354 aa).

Substrate contacts are provided by residues 27–31 (RQAGR), Asp77, Tyr154, Thr209, and His327.

It belongs to the uroporphyrinogen decarboxylase family. Homodimer.

It is found in the cytoplasm. It catalyses the reaction uroporphyrinogen III + 4 H(+) = coproporphyrinogen III + 4 CO2. The protein operates within porphyrin-containing compound metabolism; protoporphyrin-IX biosynthesis; coproporphyrinogen-III from 5-aminolevulinate: step 4/4. In terms of biological role, catalyzes the decarboxylation of four acetate groups of uroporphyrinogen-III to yield coproporphyrinogen-III. This chain is Uroporphyrinogen decarboxylase, found in Salmonella agona (strain SL483).